A 200-amino-acid chain; its full sequence is 3-isopropylmalate dehydratase small subunit (200 aa).

It belongs to the LeuD family. LeuD type 1 subfamily. Heterodimer of LeuC and LeuD.

It catalyses the reaction (2R,3S)-3-isopropylmalate = (2S)-2-isopropylmalate. It participates in amino-acid biosynthesis; L-leucine biosynthesis; L-leucine from 3-methyl-2-oxobutanoate: step 2/4. Functionally, catalyzes the isomerization between 2-isopropylmalate and 3-isopropylmalate, via the formation of 2-isopropylmaleate. This Vibrio vulnificus (strain CMCP6) protein is 3-isopropylmalate dehydratase small subunit.